Here is a 797-residue protein sequence, read N- to C-terminus: LPS-assembly protein LptD (797 aa).

Residues 1–20 form the signal peptide; the sequence is MHTIRCLILSALSVAGAAQA. A disordered region spans residues 23 to 45; sequence SQDAAPAGRQPVGSVASPGLEMP.

This sequence belongs to the LptD family. In terms of assembly, component of the lipopolysaccharide transport and assembly complex. Interacts with LptE and LptA.

It is found in the cell outer membrane. Together with LptE, is involved in the assembly of lipopolysaccharide (LPS) at the surface of the outer membrane. In Bordetella avium (strain 197N), this protein is LPS-assembly protein LptD.